The chain runs to 175 residues: Major MR/P fimbria protein (175 aa).

A signal peptide spans 1-23; the sequence is MKLNKLALVLGLGLSVVAGSALA. A disulfide bridge links Cys42 with Cys81.

This sequence belongs to the fimbrial protein family.

The protein localises to the fimbrium. Major structural component of mannose-resistant/proteus-like fimbriae of P.mirabilis. In Proteus mirabilis (strain HI4320), this protein is Major MR/P fimbria protein (mrpA).